Consider the following 359-residue polypeptide: S-adenosylmethionine:tRNA ribosyltransferase-isomerase (359 aa).

This sequence belongs to the QueA family. As to quaternary structure, monomer.

It is found in the cytoplasm. The catalysed reaction is 7-aminomethyl-7-carbaguanosine(34) in tRNA + S-adenosyl-L-methionine = epoxyqueuosine(34) in tRNA + adenine + L-methionine + 2 H(+). The protein operates within tRNA modification; tRNA-queuosine biosynthesis. Functionally, transfers and isomerizes the ribose moiety from AdoMet to the 7-aminomethyl group of 7-deazaguanine (preQ1-tRNA) to give epoxyqueuosine (oQ-tRNA). The protein is S-adenosylmethionine:tRNA ribosyltransferase-isomerase of Synechococcus sp. (strain ATCC 27144 / PCC 6301 / SAUG 1402/1) (Anacystis nidulans).